Here is a 207-residue protein sequence, read N- to C-terminus: Small ribosomal subunit protein uS4c (207 aa).

One can recognise an S4 RNA-binding domain in the interval 92–156 (MRLDNILFRL…YQSIITKRIE (65 aa)).

This sequence belongs to the universal ribosomal protein uS4 family. In terms of assembly, part of the 30S ribosomal subunit. Contacts protein S5. The interaction surface between S4 and S5 is involved in control of translational fidelity.

The protein resides in the plastid. It is found in the chloroplast. Functionally, one of the primary rRNA binding proteins, it binds directly to 16S rRNA where it nucleates assembly of the body of the 30S subunit. With S5 and S12 plays an important role in translational accuracy. This Equisetum arvense (Field horsetail) protein is Small ribosomal subunit protein uS4c (rps4).